Consider the following 320-residue polypeptide: Ferrochelatase (320 aa).

Residues histidine 194 and glutamate 275 each coordinate Fe cation.

Belongs to the ferrochelatase family. Monomer.

Its subcellular location is the cytoplasm. It carries out the reaction heme b + 2 H(+) = protoporphyrin IX + Fe(2+). Its pathway is porphyrin-containing compound metabolism; protoheme biosynthesis; protoheme from protoporphyrin-IX: step 1/1. Its function is as follows. Catalyzes the ferrous insertion into protoporphyrin IX. The protein is Ferrochelatase of Shigella sonnei (strain Ss046).